A 438-amino-acid chain; its full sequence is Protein c-ets-1-A (438 aa).

The 86-residue stretch at 49–134 (ATFSRFTKEQ…EHLEILQKDS (86 aa)) folds into the PNT domain. An activation domain; required for transcription activation region spans residues 128 to 240 (EILQKDSKQY…DNMCLGRISR (113 aa)). The tract at residues 301-309 (FKDYVRDRA) is helix HI-1. Residues 320–327 (AAALAGYT) form a helix HI-2 region. The ETS DNA-binding region spans 332–412 (IQLWQFLLEL…AGKRYVYRFV (81 aa)). Residues 415–419 (LQSLL) form a helix H4 region. The helix H5 stretch occupies residues 423–429 (PEELHAM).

It belongs to the ETS family. As to quaternary structure, binds DNA as a homodimer; homodimerization is required for transcription activation.

It localises to the nucleus. It is found in the cytoplasm. Its activity is regulated as follows. Autoinhibited by a module composed of four alpha helices (HI-1, HI-2, H4, and H5) that flank the DNA-binding ETS domain, reducing the affinity for DNA. Its function is as follows. Transcription factor. Directly controls the expression of cytokine and chemokine genes in a wide variety of different cellular contexts. In Xenopus laevis (African clawed frog), this protein is Protein c-ets-1-A (ets1-a).